We begin with the raw amino-acid sequence, 236 residues long: MIYAEILAGGKGTRMGNVNMPKQYLPLKGKPIIVHTIEKFILNDRFEKIIIATPKDWINHTQDIIKKYIFDSRVIVIEGGTDRNETIMNGIRYVEKEFGLNEDDIIVTHDAVRPFITHRIIEENIDMALEFGSVDTVIPAVDTIVESTNHDFITDIPVRGNIYQGQTPQSFNMKTIQKHYNNLTDDEKQILTDACKICLLAGEKVKLVNGGISNIKITTPYDLKVANAIVQERINS.

CTP-binding positions include 7 to 10 and 80 to 86; these read LAGG and GTDRNET.

This sequence belongs to the IspD/TarI cytidylyltransferase family. TarI subfamily.

The enzyme catalyses D-ribitol 5-phosphate + CTP + H(+) = CDP-L-ribitol + diphosphate. Its pathway is cell wall biogenesis; poly(ribitol phosphate) teichoic acid biosynthesis. Its function is as follows. Catalyzes the transfer of the cytidylyl group of CTP to D-ribitol 5-phosphate. This Listeria monocytogenes serovar 1/2a (strain ATCC BAA-679 / EGD-e) protein is Ribitol-5-phosphate cytidylyltransferase.